The primary structure comprises 83 residues: Three-finger toxin MALT0066C (83 aa).

Positions 1–21 (MKTLLLTLVVVTIVCLDFGHT) are cleaved as a signal peptide. Intrachain disulfides connect Cys-24–Cys-45, Cys-38–Cys-62, Cys-64–Cys-75, and Cys-76–Cys-81.

Belongs to the three-finger toxin family. Short-chain subfamily. Type I alpha-neurotoxin sub-subfamily. As to quaternary structure, dimer. In terms of tissue distribution, expressed by the venom gland.

Its subcellular location is the secreted. Functionally, binds to muscle nicotinic acetylcholine receptor (nAChR) and inhibit acetylcholine from binding to the receptor, thereby impairing neuromuscular transmission. This is Three-finger toxin MALT0066C from Micrurus altirostris (Uruguayan coral snake).